Here is a 414-residue protein sequence, read N- to C-terminus: Serine hydroxymethyltransferase (414 aa).

(6S)-5,6,7,8-tetrahydrofolate is bound by residues Leu-117 and Gly-121–Leu-123. N6-(pyridoxal phosphate)lysine is present on Lys-226. Ser-349–Phe-351 is a (6S)-5,6,7,8-tetrahydrofolate binding site.

It belongs to the SHMT family. In terms of assembly, homodimer. It depends on pyridoxal 5'-phosphate as a cofactor.

It localises to the cytoplasm. It catalyses the reaction (6R)-5,10-methylene-5,6,7,8-tetrahydrofolate + glycine + H2O = (6S)-5,6,7,8-tetrahydrofolate + L-serine. Its pathway is one-carbon metabolism; tetrahydrofolate interconversion. It participates in amino-acid biosynthesis; glycine biosynthesis; glycine from L-serine: step 1/1. In terms of biological role, catalyzes the reversible interconversion of serine and glycine with tetrahydrofolate (THF) serving as the one-carbon carrier. This reaction serves as the major source of one-carbon groups required for the biosynthesis of purines, thymidylate, methionine, and other important biomolecules. Also exhibits THF-independent aldolase activity toward beta-hydroxyamino acids, producing glycine and aldehydes, via a retro-aldol mechanism. In Desulfovibrio desulfuricans (strain ATCC 27774 / DSM 6949 / MB), this protein is Serine hydroxymethyltransferase.